The primary structure comprises 255 residues: Probable esterase ATEG_07663 (255 aa).

Residues serine 122, aspartate 200, and histidine 227 each act as charge relay system in the active site.

Belongs to the LovG family.

Its function is as follows. Probable esterase; part of the cluster B that mediates the biosynthesis of azasperpyranones, members of the azaphilone family that exhibit anti-cancer activities. Azasperpyranones are synthesized by 2 clusters, A and B. Cluster A is responsible for the production of the polyhydric phenol moiety while the azaphilonoid scaffold is produced by the cluster B. The non-reducing polyketide synthase ATEG_03629 produces 5-methyl orsellinic acid, which is then reduced to 5-methyl orsellinic aldehyde by the NRPS-like protein ATEG_03630. 5-methyl orsellinic aldehyde is then first hydroxylated by the FAD-dependent monooxygenase ATEG_03635 and subsequently hydroxylated by the cytochrome P450 monooxygenase ATEG_03631 to produce the unstable polyhydric phenol precursor of azasperpyranones. On the other hand, the polyketide synthase ATEG_07659 is responsible for producing the 3,5-dimethyloctadienone moiety from acetyl-CoA, three malonyl-CoA, and two S-adenosyl methionines (SAM). The 3,5-dimethyloctadienone moiety is then loaded onto the SAT domain of ATEG_07661 and extended with four malonyl-CoA and one SAM, which leads to the formation of 2,4-dihydroxy-6-(5,7-dimethyl-2-oxo-trans-3-trans-5-nonadienyl)-3-methylbenzaldehyde (compound 8) after reductive release and aldol condensation. The FAD-dependent monooxygenase ATEG_07662 is the next enzyme in the biosynthesis sequence and hydroxylates the side chain at the benzylic position of compound 8. In Aspergillus nidulans, afoF, the ortholog of the FAD-dependent oxygenase ATEG_07660, is the key enzyme for the biosynthesis of asperfuranone by catalyzing the hydroxylation at C-8 of to prevent the formation of a six-membered ring hemiacetal intermediate and thus facilitating the formation of a five-membered ring to produce asperfuranone. In Aspergillus terreus, ATEG_07660 is probably not functional, which leads to the formation of the six-membered ring hemiacetal intermediate presperpyranone instead of asperfuranone. Finally, ATEG_03636 is involved in the condensation of the polyhydric phenol moiety produced by cluster A and the perasperpyranone precursor produced by cluster B, to yield azasperpyranone A. Further modifications of azasperpyranone A result in the production of derivatives, including azasperpyranone B to F. The sequence is that of Probable esterase ATEG_07663 from Aspergillus terreus (strain NIH 2624 / FGSC A1156).